The primary structure comprises 495 residues: UDP-glycosyltransferase 73C13 (495 aa).

The active-site Proton acceptor is the histidine 24. Histidine 24 is an an anthocyanidin binding site. Aspartate 129 serves as the catalytic Charge relay. 7 residues coordinate UDP-alpha-D-glucose: alanine 356, glutamine 358, histidine 373, tryptophan 376, asparagine 377, serine 378, and glutamate 381. Position 396 (alanine 396) interacts with an anthocyanidin. 2 residues coordinate UDP-alpha-D-glucose: aspartate 397 and glutamine 398.

This sequence belongs to the UDP-glycosyltransferase family.

It carries out the reaction oleanolate + UDP-alpha-D-glucose = oleanolate 3-O-beta-D-glucoside + UDP + H(+). Functionally, catalyzes the transfer of a glucose (Glc) moiety from UDP-Glc to the C-3 position of the oleanane sapogenins oleanolate and hederagenin, and to the C-28 carboxylic group of the lupane sapogenin betulinate. The monoglucosylated hederagenin 3-O-beta-D-glucoside is a feeding deterrent of the yellow-striped flea beetle (Phyllotreta nemorum). The protein is UDP-glycosyltransferase 73C13 of Barbarea vulgaris (Yellow rocket).